Here is a 146-residue protein sequence, read N- to C-terminus: MTDVQIPSPIVATRVAEADRLRFLPTYFGPSMLRMLRGEALVFGWMGRLCAAYHGGFWHFYTLSNGGFYMAPEHDGRLRIEVDGNGFAGELSADAAGIVATLFALNQLCAELAGTADADALIDRYHHLAAFASEHAEAAAIYRAID.

It belongs to the antirestriction protein family.

Functionally, could be involved in overcoming restriction barriers during establishment after conjugative transfer. This is Antirestriction protein KlcA (klcA) from Escherichia coli.